The following is a 494-amino-acid chain: MDDFSRDTENFVCWLKTTAEIEVSPKIEIKDLCCDNQGRAVVATQKIKKDETLFKIPRSSVLSVTTSQLIKDYPSLKDKFLNETGSWEGLIICILYEMEVLQERSRWAPYFKVWNKPSDMNALIFWDDNELQLLKPSLVLERIGKKEAKEMHERIIKSIKQIGGEFSRVATSFEFDNFAYIASIILSYSFDLEMQDSSVNENEEEETSEEELENERYLKSMIPLADMLNADTSKCNANLTYDSNCLKMVALRDIEKNEQVYNIYGEHPNSELLRRYGYVEWDGSKYDFGEVLLENIVEALKETFETNTEFLDRCIDILRNNANIQEFLEGEEIVLDSYDCYNNGELLPQLILLVQILTILCQIPGLCKLDIKAMERQVERIVKKCLQLIEGARATTNCSATWKRCIMKRLADYPIKKCVSIEKPSKGNSLTREELRDVMARRVLKSEIDSLQVCEETIDKNYKVIPDEKLLTNILKRKLTEEEKSSVKRPCVKK.

Residues Pro25–Gly265 enclose the SET domain. Tyr264 is a binding site for S-adenosyl-L-methionine.

It belongs to the class V-like SAM-binding methyltransferase superfamily. Histone-lysine methyltransferase family. SETD6 subfamily.

It is found in the nucleus. Functionally, S-adenosyl-L-methionine-dependent protein-lysine N-methyltransferase that monomethylates 60S ribosomal protein L42 (RPL42A and RPL42B) at 'Lys-55'. The chain is Ribosomal lysine N-methyltransferase 4 from Saccharomyces cerevisiae (strain ATCC 204508 / S288c) (Baker's yeast).